Consider the following 88-residue polypeptide: Small ribosomal subunit protein bS20 (88 aa).

Disordered stretches follow at residues 1-25 and 61-88; these read MANS…KARR and GVTK…ALGA.

The protein belongs to the bacterial ribosomal protein bS20 family.

Functionally, binds directly to 16S ribosomal RNA. This Jannaschia sp. (strain CCS1) protein is Small ribosomal subunit protein bS20.